A 672-amino-acid chain; its full sequence is Threonine--tRNA ligase (672 aa).

In terms of domain architecture, TGS spans 1–64 (MTELLKISLP…EGDAELALIT (64 aa)). Positions 257 to 566 (DHRKLGREMD…LIEHFAGRLP (310 aa)) are catalytic. Cysteine 362, histidine 413, and histidine 543 together coordinate Zn(2+).

The protein belongs to the class-II aminoacyl-tRNA synthetase family. As to quaternary structure, homodimer. The cofactor is Zn(2+).

Its subcellular location is the cytoplasm. The catalysed reaction is tRNA(Thr) + L-threonine + ATP = L-threonyl-tRNA(Thr) + AMP + diphosphate + H(+). Functionally, catalyzes the attachment of threonine to tRNA(Thr) in a two-step reaction: L-threonine is first activated by ATP to form Thr-AMP and then transferred to the acceptor end of tRNA(Thr). Also edits incorrectly charged L-seryl-tRNA(Thr). The protein is Threonine--tRNA ligase of Erythrobacter litoralis (strain HTCC2594).